The chain runs to 458 residues: Adenylosuccinate synthetase (458 aa).

Residues 11-17 (GDEGKGG) and 39-41 (GHT) contribute to the GTP site. Asp-12 acts as the Proton acceptor in catalysis. The Mg(2+) site is built by Asp-12 and Gly-39. IMP is bound by residues 12-15 (DEGK), 37-40 (NAGH), Thr-127, Arg-141, Gln-232, Thr-247, and Arg-330. His-40 functions as the Proton donor in the catalytic mechanism. 326–332 (TVTGRPR) contacts substrate. GTP-binding positions include Arg-332, 358-360 (HLD), and 443-445 (GVG).

The protein belongs to the adenylosuccinate synthetase family. As to quaternary structure, homodimer. Requires Mg(2+) as cofactor.

It is found in the cytoplasm. It catalyses the reaction IMP + L-aspartate + GTP = N(6)-(1,2-dicarboxyethyl)-AMP + GDP + phosphate + 2 H(+). It functions in the pathway purine metabolism; AMP biosynthesis via de novo pathway; AMP from IMP: step 1/2. Its function is as follows. Plays an important role in the de novo pathway of purine nucleotide biosynthesis. Catalyzes the first committed step in the biosynthesis of AMP from IMP. In Haloarcula marismortui (strain ATCC 43049 / DSM 3752 / JCM 8966 / VKM B-1809) (Halobacterium marismortui), this protein is Adenylosuccinate synthetase.